Consider the following 233-residue polypeptide: Purine nucleoside phosphorylase DeoD-type (233 aa).

His-4 lines the a purine D-ribonucleoside pocket. Phosphate is bound by residues Gly-20, Arg-24, Arg-43, and 87–90; that span reads RIGT. A purine D-ribonucleoside-binding positions include 179–181 and 203–204; these read EME and SD. The active-site Proton donor is Asp-204.

The protein belongs to the PNP/UDP phosphorylase family. Homohexamer; trimer of homodimers.

It catalyses the reaction a purine D-ribonucleoside + phosphate = a purine nucleobase + alpha-D-ribose 1-phosphate. The enzyme catalyses a purine 2'-deoxy-D-ribonucleoside + phosphate = a purine nucleobase + 2-deoxy-alpha-D-ribose 1-phosphate. Functionally, catalyzes the reversible phosphorolytic breakdown of the N-glycosidic bond in the beta-(deoxy)ribonucleoside molecules, with the formation of the corresponding free purine bases and pentose-1-phosphate. The sequence is that of Purine nucleoside phosphorylase DeoD-type from Helicobacter pylori (strain P12).